A 512-amino-acid chain; its full sequence is ATP synthase subunit alpha (512 aa).

169–176 serves as a coordination point for ATP; that stretch reads GDRQTGKT.

It belongs to the ATPase alpha/beta chains family. As to quaternary structure, F-type ATPases have 2 components, CF(1) - the catalytic core - and CF(0) - the membrane proton channel. CF(1) has five subunits: alpha(3), beta(3), gamma(1), delta(1), epsilon(1). CF(0) has three main subunits: a(1), b(2) and c(9-12). The alpha and beta chains form an alternating ring which encloses part of the gamma chain. CF(1) is attached to CF(0) by a central stalk formed by the gamma and epsilon chains, while a peripheral stalk is formed by the delta and b chains.

It localises to the cell inner membrane. The catalysed reaction is ATP + H2O + 4 H(+)(in) = ADP + phosphate + 5 H(+)(out). Functionally, produces ATP from ADP in the presence of a proton gradient across the membrane. The alpha chain is a regulatory subunit. The sequence is that of ATP synthase subunit alpha from Leptothrix cholodnii (strain ATCC 51168 / LMG 8142 / SP-6) (Leptothrix discophora (strain SP-6)).